A 377-amino-acid chain; its full sequence is uncharacterized protein (377 aa).

7 helical membrane-spanning segments follow: residues Trp-21 to Phe-41, Leu-66 to Gly-86, Ile-163 to Leu-183, Ala-197 to Ile-217, Phe-236 to Phe-256, Val-292 to Leu-312, and Ile-339 to Phe-359.

The protein localises to the cell membrane. This is an uncharacterized protein from Mycoplasma pneumoniae (strain ATCC 29342 / M129 / Subtype 1) (Mycoplasmoides pneumoniae).